A 63-amino-acid chain; its full sequence is uncharacterized protein (63 aa).

2 helical membrane passes run 3 to 23 (VFLI…VYYI) and 42 to 62 (ALVC…TKLL).

Its subcellular location is the cell membrane. This is an uncharacterized protein from Bacillus subtilis (strain 168).